Here is a 68-residue protein sequence, read N- to C-terminus: Conotoxin Lt5.2 (68 aa).

The signal sequence occupies residues 1 to 19; that stretch reads MLCLPVFIILLLLASPAAP. Positions 20 to 54 are excised as a propeptide; that stretch reads KSLETRIQNDLIRAGLTDADLKTEKGFLSGLLNVA.

The protein belongs to the conotoxin T superfamily. Post-translationally, contains 2 disulfide bonds that can be either 'C1-C3, C2-C4' or 'C1-C4, C2-C3', since these disulfide connectivities have been observed for conotoxins with cysteine framework V (for examples, see AC P0DQQ7 and AC P81755). As to expression, expressed by the venom duct.

The protein localises to the secreted. This chain is Conotoxin Lt5.2, found in Conus litteratus (Lettered cone).